Reading from the N-terminus, the 142-residue chain is Large ribosomal subunit protein uL13 (142 aa).

The protein belongs to the universal ribosomal protein uL13 family. Part of the 50S ribosomal subunit.

In terms of biological role, this protein is one of the early assembly proteins of the 50S ribosomal subunit, although it is not seen to bind rRNA by itself. It is important during the early stages of 50S assembly. The protein is Large ribosomal subunit protein uL13 of Acinetobacter baumannii (strain AB0057).